Here is a 418-residue protein sequence, read N- to C-terminus: Serine--tRNA ligase (418 aa).

227-229 (TSE) contributes to the L-serine binding site. ATP contacts are provided by residues 258 to 260 (RRE) and valine 274. Glutamate 281 lines the L-serine pocket. 345–348 (ELTS) is an ATP binding site. Threonine 380 serves as a coordination point for L-serine.

It belongs to the class-II aminoacyl-tRNA synthetase family. Type-1 seryl-tRNA synthetase subfamily. As to quaternary structure, homodimer. The tRNA molecule binds across the dimer.

The protein resides in the cytoplasm. The catalysed reaction is tRNA(Ser) + L-serine + ATP = L-seryl-tRNA(Ser) + AMP + diphosphate + H(+). It catalyses the reaction tRNA(Sec) + L-serine + ATP = L-seryl-tRNA(Sec) + AMP + diphosphate + H(+). It participates in aminoacyl-tRNA biosynthesis; selenocysteinyl-tRNA(Sec) biosynthesis; L-seryl-tRNA(Sec) from L-serine and tRNA(Sec): step 1/1. In terms of biological role, catalyzes the attachment of serine to tRNA(Ser). Is also able to aminoacylate tRNA(Sec) with serine, to form the misacylated tRNA L-seryl-tRNA(Sec), which will be further converted into selenocysteinyl-tRNA(Sec). The chain is Serine--tRNA ligase from Rhodococcus opacus (strain B4).